We begin with the raw amino-acid sequence, 85 residues long: Large ribosomal subunit protein bL31B (85 aa).

It belongs to the bacterial ribosomal protein bL31 family. Type B subfamily. Part of the 50S ribosomal subunit.

The polypeptide is Large ribosomal subunit protein bL31B (Staphylococcus epidermidis (strain ATCC 35984 / DSM 28319 / BCRC 17069 / CCUG 31568 / BM 3577 / RP62A)).